Consider the following 61-residue polypeptide: uncharacterized protein (61 aa).

This is an uncharacterized protein from Enterobacteria phage T4 (Bacteriophage T4).